We begin with the raw amino-acid sequence, 878 residues long: MTASKSSSATASASDRPDRYDPIALEQRWQSQWQQDDLYATRSPEPGQNAFYALSMFPYPSGSLHMGHVRNYVITDVIARAQRMRGDSVLHPMGWDAFGLPAENAAIERQVDPGVWTDRNIEQMKAQLARLGLSIDWSREQATCHADYYRWTQWLFLELMDQGLAYQKDATVNWDPVDQTVLANEQVDSEGRSWRSGALVEQKNLRQWFLRITNYADALLDDLDLLKGWPERVRTMQANWIGRSIGAEIDFRVSDHDDAVITVFTTRADTLHGVSYVVLAPEHPLVATLTAEHQRESVAAFRDLVGELSADERTADDRPKRGVPIGATAVNPANGESIPIWIADYVLAGYGTGAVMGVPAHDERDFLFARTYELPVKRVIQAAGTSDHLSDGEAWTGPGILLNSGRFDGQSSEEARQEITAHGQELGWARPKRQYRLRDWLISRQRYWGCPIPVIHCDHCGAVPVPADQLPVTLPKDVDLQGKGGSPLASLQSWVNVKCPSCGRDARRETDTMDTFMCSSWYFLRFADPHNTERAFDADAVERWLPVQQYVGGIEHAILHLLYSRFFTKALRDRGLLNIREPFERLLTQGMVQGVTYRNPRTGRYVAPSEVSDENAPKDPVDGGELEVLFEKMSKSKYNGVDPAAVIDRYGADTARMFILFKAPPEKDLEWDDADVEGQFRFLQRLWRLIESVRSDDQDQLLGDPVDPPEGSGLSDKEGEIRRAVHTAIEAVSDDLKGDFQFNTAISELMKLSNTLSGALPEASRAVQAEAVSALIRLLAPFAPHLAEEFWFSLGGQDSVHKQPWPLHDPAALVRDTVDLVIQVKGKVRGTITVPADCSKETLEELALASDVAERWLEGKPPRRVIVVPGKLVNLVPS.

Residues 1-14 are compositionally biased toward low complexity; it reads MTASKSSSATASAS. Positions 1-23 are disordered; that stretch reads MTASKSSSATASASDRPDRYDPI. The 'HIGH' region signature appears at 58–68; sequence PYPSGSLHMGH. The short motif at 632–636 is the 'KMSKS' region element; that stretch reads KMSKS. Lys-635 is an ATP binding site.

The protein belongs to the class-I aminoacyl-tRNA synthetase family.

Its subcellular location is the cytoplasm. It catalyses the reaction tRNA(Leu) + L-leucine + ATP = L-leucyl-tRNA(Leu) + AMP + diphosphate. The protein is Leucine--tRNA ligase of Synechococcus sp. (strain WH7803).